Reading from the N-terminus, the 447-residue chain is Putative branched-chain amino acid carrier protein SAUSA300_1300 (447 aa).

Helical transmembrane passes span 6 to 26 (WVIGFTLFAMFFGAGNLIFPP), 40 to 60 (ILAFVLTGIGLPLLGVIVGAL), 74 to 94 (PKFSILFLIIIYLTIGPLFAI), 114 to 134 (SSIALFIFTIIYFIVVLYICL), 143 to 163 (IGSLLTPLLLITILAMIIKGY), 193 to 213 (GYLTMDAIAAIAFSMIVVNAV), 229 to 249 (LTAGLIAAVALIFIYISLGYI), 290 to 310 (LLGIIVALACLTTACGLIVAV), 326 to 346 (FVLVFILMSFIIANQGLNAVI), 350 to 370 (IPVLSIVYPVAITVVLLILIA), 382 to 402 (IPVIIVFILSIFSVISKLGWL), and 417 to 437 (LEWFPVAIIATILGYLVGIFV).

The protein belongs to the branched chain amino acid transporter family.

It is found in the cell membrane. In terms of biological role, component of the transport system for branched-chain amino acids (leucine, isoleucine and valine), which is coupled to a proton motive force (Potential). Contributes to NaCl tolerance. This chain is Putative branched-chain amino acid carrier protein SAUSA300_1300, found in Staphylococcus aureus (strain USA300).